We begin with the raw amino-acid sequence, 232 residues long: Small ribosomal subunit protein uS3 (232 aa).

In terms of domain architecture, KH type-2 spans 39-107 (VRQYLTKELK…PAQINIAEVR (69 aa)).

This sequence belongs to the universal ribosomal protein uS3 family. As to quaternary structure, part of the 30S ribosomal subunit. Forms a tight complex with proteins S10 and S14.

Functionally, binds the lower part of the 30S subunit head. Binds mRNA in the 70S ribosome, positioning it for translation. In Aliivibrio salmonicida (strain LFI1238) (Vibrio salmonicida (strain LFI1238)), this protein is Small ribosomal subunit protein uS3.